A 380-amino-acid chain; its full sequence is Pregnancy-associated glycoprotein 4 (380 aa).

The N-terminal stretch at 1-15 is a signal peptide; that stretch reads MKWLVLLGLVAFSEC. Positions 16–53 are cleaved as a propeptide — activation peptide; that stretch reads IFKIPLRRVKTMRKTLSGKNMLNDVLKEHPYRLPQISF. The 307-residue stretch at 71-377 folds into the Peptidase A1 domain; it reads YVGNITIGTP…DRGNDRIGLA (307 aa). A glycan (N-linked (GlcNAc...) asparagine) is linked at Asn-74. Asp-89 is a catalytic residue. Cys-102 and Cys-107 form a disulfide bridge. N-linked (GlcNAc...) asparagine glycosylation is present at Asn-125. Cys-261 and Cys-265 are joined by a disulfide. Asp-270 is an active-site residue. A disulfide bridge links Cys-303 with Cys-337.

It belongs to the peptidase A1 family. In terms of tissue distribution, trophoblast and placental tissue. Produced specifically in the invasive binucleate cells of the placenta.

The protein localises to the secreted. It is found in the extracellular space. The protein is Pregnancy-associated glycoprotein 4 of Ovis aries (Sheep).